The sequence spans 253 residues: Imidazole glycerol phosphate synthase subunit HisF (253 aa).

Active-site residues include D11 and D130.

It belongs to the HisA/HisF family. Heterodimer of HisH and HisF.

The protein resides in the cytoplasm. It catalyses the reaction 5-[(5-phospho-1-deoxy-D-ribulos-1-ylimino)methylamino]-1-(5-phospho-beta-D-ribosyl)imidazole-4-carboxamide + L-glutamine = D-erythro-1-(imidazol-4-yl)glycerol 3-phosphate + 5-amino-1-(5-phospho-beta-D-ribosyl)imidazole-4-carboxamide + L-glutamate + H(+). The protein operates within amino-acid biosynthesis; L-histidine biosynthesis; L-histidine from 5-phospho-alpha-D-ribose 1-diphosphate: step 5/9. Its function is as follows. IGPS catalyzes the conversion of PRFAR and glutamine to IGP, AICAR and glutamate. The HisF subunit catalyzes the cyclization activity that produces IGP and AICAR from PRFAR using the ammonia provided by the HisH subunit. The polypeptide is Imidazole glycerol phosphate synthase subunit HisF (Desulfitobacterium hafniense (strain DSM 10664 / DCB-2)).